The primary structure comprises 307 residues: uncharacterized protein (307 aa).

Positions 54–307 constitute an EAL domain; sequence RHYLSTSMRV…KALPVDFFRE (254 aa). 2 helical membrane passes run 158 to 178 and 203 to 223; these read PGFL…AHAL and ALGV…LAYL.

It is found in the cell membrane. This is an uncharacterized protein from Mycobacterium tuberculosis (strain CDC 1551 / Oshkosh).